Here is a 337-residue protein sequence, read N- to C-terminus: Vacuolar protein sorting-associated protein 26B-B (337 aa).

The interval 313-337 (RFEGTSHPETRPQHSGAAALEQEHE) is disordered.

It belongs to the VPS26 family. In terms of assembly, component of the heterotrimeric retromer cargo-selective complex (CSC) which is believed to associate with variable sorting nexins to form functionally distinct retromer complex variants.

The protein resides in the cytoplasm. Its subcellular location is the membrane. It localises to the endosome. Its function is as follows. Acts as a component of the retromer cargo-selective complex (CSC). The CSC is believed to be the core functional component of retromer or respective retromer complex variants acting to prevent missorting of selected transmembrane cargo proteins into the lysosomal degradation pathway. Retromer mediates retrograde transport of cargo proteins from endosomes to the trans-Golgi network (TGN). This chain is Vacuolar protein sorting-associated protein 26B-B (vps26b-b), found in Xenopus laevis (African clawed frog).